Here is a 525-residue protein sequence, read N- to C-terminus: GMP synthase [glutamine-hydrolyzing] (525 aa).

One can recognise a Glutamine amidotransferase type-1 domain in the interval 9–207 (RILILDFGSQ…VQDICGCEAL (199 aa)). Cys-86 acts as the Nucleophile in catalysis. Residues His-181 and Glu-183 contribute to the active site. In terms of domain architecture, GMPS ATP-PPase spans 208–400 (WTASNIVEDA…LGLPYDMVYR (193 aa)). 235–241 (SGGVDSS) provides a ligand contact to ATP.

Homodimer.

It carries out the reaction XMP + L-glutamine + ATP + H2O = GMP + L-glutamate + AMP + diphosphate + 2 H(+). It functions in the pathway purine metabolism; GMP biosynthesis; GMP from XMP (L-Gln route): step 1/1. Functionally, catalyzes the synthesis of GMP from XMP. The sequence is that of GMP synthase [glutamine-hydrolyzing] from Pseudomonas putida (strain GB-1).